We begin with the raw amino-acid sequence, 144 residues long: Large ribosomal subunit protein uL13 (144 aa).

This sequence belongs to the universal ribosomal protein uL13 family. Part of the 50S ribosomal subunit.

This protein is one of the early assembly proteins of the 50S ribosomal subunit, although it is not seen to bind rRNA by itself. It is important during the early stages of 50S assembly. The protein is Large ribosomal subunit protein uL13 of Clostridium novyi (strain NT).